A 130-amino-acid chain; its full sequence is Large ribosomal subunit protein bL20 (130 aa).

Belongs to the bacterial ribosomal protein bL20 family.

Functionally, binds directly to 23S ribosomal RNA and is necessary for the in vitro assembly process of the 50S ribosomal subunit. It is not involved in the protein synthesizing functions of that subunit. In Clavibacter michiganensis subsp. michiganensis (strain NCPPB 382), this protein is Large ribosomal subunit protein bL20.